We begin with the raw amino-acid sequence, 277 residues long: Phosphate import ATP-binding protein PstB 1 (277 aa).

Positions 27–272 (LRVRDLAVSY…PSHELTAAYI (246 aa)) constitute an ABC transporter domain. Residue 59-66 (GPSGCGKT) coordinates ATP.

It belongs to the ABC transporter superfamily. Phosphate importer (TC 3.A.1.7) family. The complex is composed of two ATP-binding proteins (PstB), two transmembrane proteins (PstC and PstA) and a solute-binding protein (PstS).

The protein resides in the cell inner membrane. It carries out the reaction phosphate(out) + ATP + H2O = ADP + 2 phosphate(in) + H(+). Part of the ABC transporter complex PstSACB involved in phosphate import. Responsible for energy coupling to the transport system. This chain is Phosphate import ATP-binding protein PstB 1, found in Nitrosococcus oceani (strain ATCC 19707 / BCRC 17464 / JCM 30415 / NCIMB 11848 / C-107).